Here is a 653-residue protein sequence, read N- to C-terminus: Sodium-dependent nutrient amino acid transporter 1 (653 aa).

The interval 1–55 (MELKGVHQQNGTSNGTGAAGTEGESPPPAPAPATAEAAASLETTTEKVDAEQQKT) is disordered. The Cytoplasmic segment spans residues 1–59 (MELKGVHQQNGTSNGTGAAGTEGESPPPAPAPATAEAAASLETTTEKVDAEQQKTERTN). Composition is skewed to low complexity over residues 10-24 (NGTSNGTGAAGTEGE) and 32-43 (PATAEAAASLET). Residues 44–55 (TTEKVDAEQQKT) show a composition bias toward basic and acidic residues. The next 4 membrane-spanning stretches (helical) occupy residues 60 to 80 (WGNGLEFLMSCISVSVGLGNV), 93 to 113 (GAFLIPYIIVLFLIGKPMYYL), 125 to 145 (TVKIWSVVPGFVGVGYGQAFA), and 146 to 166 (TICIITYYSSLLALTLFYLFV). N-linked (GlcNAc...) asparagine glycans are attached at residues Asn202 and Asn205. Helical transmembrane passes span 241–261 (PDWKLTLALFVSWVVIFLVIM), 270–290 (AAYFLALFPYVVLFILLVRAV), 319–339 (AVVQCFFSLAVGSGPIIMFAS), 353–373 (IVTTLDTLTSLLGGITIFAIL), 413–433 (LFSVLFFFMLFVLGIGSIVAL), 459–479 (ICGFLMGLVYVTPGGQWILTL), 486–506 (TYVVFILAIFELAGIVWIYGM), 528–548 (CWSFFTPVMMIVIFIYSMVTI), and 565–585 (AGWLLFGIGAAQFPLWWMWYI).

It belongs to the sodium:neurotransmitter symporter (SNF) (TC 2.A.22) family.

The protein localises to the membrane. Its function is as follows. Unusual broad substrate spectrum amino acid:sodium cotransporter that promotes absorption of the D isomers of essential amino acids. Neutral amino acids are the preferred substrates, especially methionine and phenylalanine. The protein is Sodium-dependent nutrient amino acid transporter 1 of Drosophila pseudoobscura pseudoobscura (Fruit fly).